We begin with the raw amino-acid sequence, 595 residues long: DNA mismatch repair protein MutL (595 aa).

Belongs to the DNA mismatch repair MutL/HexB family.

Its function is as follows. This protein is involved in the repair of mismatches in DNA. It is required for dam-dependent methyl-directed DNA mismatch repair. May act as a 'molecular matchmaker', a protein that promotes the formation of a stable complex between two or more DNA-binding proteins in an ATP-dependent manner without itself being part of a final effector complex. This is DNA mismatch repair protein MutL from Rhodopseudomonas palustris (strain TIE-1).